Reading from the N-terminus, the 102-residue chain is MTLKEFIDKLLRRQPASAETAKERLQLVLAHDRSDLNPELLEQMRREILEVVARYVEIDLAQGDVSLETEDRVTALVANLPIRRPIAQTAKVEPSEQQPAQA.

The protein belongs to the MinE family.

Prevents the cell division inhibition by proteins MinC and MinD at internal division sites while permitting inhibition at polar sites. This ensures cell division at the proper site by restricting the formation of a division septum at the midpoint of the long axis of the cell. The protein is Cell division topological specificity factor of Synechococcus sp. (strain CC9605).